Reading from the N-terminus, the 72-residue chain is SRY-related protein AES1 (72 aa).

Residues 1–69 (VKRPMNAFMV…KHMADYPDYK (69 aa)) constitute a DNA-binding region (HMG box).

The protein resides in the nucleus. The chain is SRY-related protein AES1 from Alligator mississippiensis (American alligator).